Reading from the N-terminus, the 712-residue chain is Patatin-like phospholipase domain-containing protein ACLA_029670 (712 aa).

Polar residues predominate over residues 1–10 (MTSAEKSATR). Residues 1 to 20 (MTSAEKSATRNIYDPSALPD) form a disordered region. The chain crosses the membrane as a helical span at residues 85–105 (WPFLFIVFAWITVLGIAYALT). The PNPLA domain maps to 275–466 (LCLSGGATFA…RTDIPIKALN (192 aa)). The short motif at 306 to 310 (GTSGG) is the GXSXG element. Residue Ser-308 is the Nucleophile of the active site. The active-site Proton acceptor is Asp-453. The span at 649 to 664 (FPERHSDYKDESHYTE) shows a compositional bias: basic and acidic residues. Residues 649 to 686 (FPERHSDYKDESHYTEVSDSLSTNSSRPHTPDARRGSI) form a disordered region. The span at 665-676 (VSDSLSTNSSRP) shows a compositional bias: polar residues. The span at 677-686 (HTPDARRGSI) shows a compositional bias: basic and acidic residues.

It belongs to the PLPL family.

The protein resides in the membrane. Functionally, probable lipid hydrolase. The sequence is that of Patatin-like phospholipase domain-containing protein ACLA_029670 from Aspergillus clavatus (strain ATCC 1007 / CBS 513.65 / DSM 816 / NCTC 3887 / NRRL 1 / QM 1276 / 107).